Here is a 117-residue protein sequence, read N- to C-terminus: MTSNKTAKIQFYEGTDEPVVPEIRLTRSKDGTTGQALFLFEKPQALSSITDGEITGMRMIDTEGEILTREVKVKFVDGEPIFLEAVYIWKNTPDFDRFMRFANSYAKSNGLGYSEKK.

Belongs to the Psb28 family. As to quaternary structure, part of the photosystem II complex.

The protein localises to the cellular thylakoid membrane. The polypeptide is Photosystem II reaction center Psb28 protein (Prochlorococcus marinus (strain AS9601)).